Here is a 290-residue protein sequence, read N- to C-terminus: 4-hydroxy-tetrahydrodipicolinate synthase (290 aa).

Thr44 is a pyruvate binding site. Catalysis depends on Tyr132, which acts as the Proton donor/acceptor. Lys160 acts as the Schiff-base intermediate with substrate in catalysis. Position 202 (Ile202) interacts with pyruvate.

Belongs to the DapA family. In terms of assembly, homotetramer; dimer of dimers.

Its subcellular location is the cytoplasm. The catalysed reaction is L-aspartate 4-semialdehyde + pyruvate = (2S,4S)-4-hydroxy-2,3,4,5-tetrahydrodipicolinate + H2O + H(+). It functions in the pathway amino-acid biosynthesis; L-lysine biosynthesis via DAP pathway; (S)-tetrahydrodipicolinate from L-aspartate: step 3/4. In terms of biological role, catalyzes the condensation of (S)-aspartate-beta-semialdehyde [(S)-ASA] and pyruvate to 4-hydroxy-tetrahydrodipicolinate (HTPA). This Trichlorobacter lovleyi (strain ATCC BAA-1151 / DSM 17278 / SZ) (Geobacter lovleyi) protein is 4-hydroxy-tetrahydrodipicolinate synthase.